The sequence spans 180 residues: Ribosome maturation factor RimM (180 aa).

Positions 104-177 constitute a PRC barrel domain; sequence PEEFHDHQLV…RVVVDPPGGL (74 aa).

Belongs to the RimM family. As to quaternary structure, binds ribosomal protein uS19.

The protein localises to the cytoplasm. Its function is as follows. An accessory protein needed during the final step in the assembly of 30S ribosomal subunit, possibly for assembly of the head region. Essential for efficient processing of 16S rRNA. May be needed both before and after RbfA during the maturation of 16S rRNA. It has affinity for free ribosomal 30S subunits but not for 70S ribosomes. In Salinispora tropica (strain ATCC BAA-916 / DSM 44818 / JCM 13857 / NBRC 105044 / CNB-440), this protein is Ribosome maturation factor RimM.